The sequence spans 296 residues: Ribosomal RNA small subunit methyltransferase H (296 aa).

Residues 38–40, glutamate 57, phenylalanine 88, aspartate 103, and histidine 110 contribute to the S-adenosyl-L-methionine site; that span reads GVH.

This sequence belongs to the methyltransferase superfamily. RsmH family.

The protein localises to the cytoplasm. It catalyses the reaction cytidine(1402) in 16S rRNA + S-adenosyl-L-methionine = N(4)-methylcytidine(1402) in 16S rRNA + S-adenosyl-L-homocysteine + H(+). Functionally, specifically methylates the N4 position of cytidine in position 1402 (C1402) of 16S rRNA. The protein is Ribosomal RNA small subunit methyltransferase H of Borreliella burgdorferi (strain ZS7) (Borrelia burgdorferi).